The sequence spans 173 residues: PTS system glucose-specific EIIA component (173 aa).

Residues Asp40–Asn144 enclose the PTS EIIA type-1 domain. Residues His77 and His92 each contribute to the Zn(2+) site. His92 serves as the catalytic Tele-phosphohistidine intermediate; for EIIA activity. Phosphohistidine; by HPr is present on His92.

In terms of assembly, heterodimer with glycerol kinase (glpk). Zn(2+) is required as a cofactor.

The protein resides in the cytoplasm. Functionally, the phosphoenolpyruvate-dependent sugar phosphotransferase system (sugar PTS), a major carbohydrate active transport system, catalyzes the phosphorylation of incoming sugar substrates concomitantly with their translocation across the cell membrane. The enzyme II complex composed of PtsG and Crr is involved in glucose transport. The sequence is that of PTS system glucose-specific EIIA component (crr) from Halalkalibacterium halodurans (strain ATCC BAA-125 / DSM 18197 / FERM 7344 / JCM 9153 / C-125) (Bacillus halodurans).